A 556-amino-acid chain; its full sequence is Hydroxylamine reductase (556 aa).

Residues Cys4, Cys7, Cys19, and Cys26 each coordinate [4Fe-4S] cluster. Hybrid [4Fe-2O-2S] cluster-binding residues include His252, Glu276, Cys320, Cys407, Cys435, Cys460, Glu494, and Lys496. Position 407 is a cysteine persulfide (Cys407).

It belongs to the HCP family. [4Fe-4S] cluster is required as a cofactor. Hybrid [4Fe-2O-2S] cluster serves as cofactor.

Its subcellular location is the cytoplasm. It carries out the reaction A + NH4(+) + H2O = hydroxylamine + AH2 + H(+). Functionally, catalyzes the reduction of hydroxylamine to form NH(3) and H(2)O. In Acidithiobacillus ferridurans, this protein is Hydroxylamine reductase.